Here is a 940-residue protein sequence, read N- to C-terminus: Chordin (940 aa).

The signal sequence occupies residues 1-19 (MMEGLLWILLSVIIASVHG). The 77-residue stretch at 42-118 (SGCSFGGRFY…LPGHCCKTCP (77 aa)) folds into the VWFC 1 domain. CHRD domains follow at residues 162–277 (TTTD…KHRA), 279–398 (FAET…GRRS), 404–519 (SVLS…LLPY), and 525–652 (RRNE…VPNH). 2 N-linked (GlcNAc...) asparagine glycosylation sites follow: N347 and N430. VWFC domains follow at residues 689–748 (HSCF…PICE), 767–836 (EGCY…KECP), and 855–919 (RLCK…PECI).

It belongs to the chordin family. As to quaternary structure, interacts with twsg1 and/or bmp4. Post-translationally, cleaved by tolloid proteases; cleavage participates in dorsoventral patterning during early development.

Its subcellular location is the secreted. In terms of biological role, dorsalizing factor. Key developmental protein that dorsalizes early vertebrate embryonic tissues by binding to ventralizing TGF-beta family bone morphogenetic proteins (BMPs) and sequestering them in latent complexes. The chain is Chordin (chd) from Danio rerio (Zebrafish).